Here is a 952-residue protein sequence, read N- to C-terminus: Protein translocase subunit SecA (952 aa).

Residues glutamine 135, 153 to 157, and aspartate 575 contribute to the ATP site; that span reads GEGKT. Basic and acidic residues predominate over residues 614–624; the sequence is RHESRRIDNQL. Disordered regions lie at residues 614–636 and 916–946; these read RHESRRIDNQLRGRSGRQGDPGS and VSAKAATQSTTPAAKEIGRNDPCPCGSGKKY. Positions 938, 940, 949, and 950 each coordinate Zn(2+).

The protein belongs to the SecA family. As to quaternary structure, monomer and homodimer. Part of the essential Sec protein translocation apparatus which comprises SecA, SecYEG and auxiliary proteins SecDF. Other proteins may also be involved. It depends on Zn(2+) as a cofactor.

It localises to the cell membrane. The protein localises to the cytoplasm. It carries out the reaction ATP + H2O + cellular proteinSide 1 = ADP + phosphate + cellular proteinSide 2.. In terms of biological role, part of the Sec protein translocase complex. Interacts with the SecYEG preprotein conducting channel. Has a central role in coupling the hydrolysis of ATP to the transfer of proteins into and across the cell membrane, serving as an ATP-driven molecular motor driving the stepwise translocation of polypeptide chains across the membrane. The protein is Protein translocase subunit SecA of Dehalococcoides mccartyi (strain ATCC BAA-2100 / JCM 16839 / KCTC 5957 / BAV1).